Here is a 300-residue protein sequence, read N- to C-terminus: Epimerase family protein MW0731 (300 aa).

This sequence belongs to the NAD(P)-dependent epimerase/dehydratase family. SDR39U1 subfamily.

The chain is Epimerase family protein MW0731 from Staphylococcus aureus (strain MW2).